The sequence spans 262 residues: Phosphate import ATP-binding protein PstB (262 aa).

The 242-residue stretch at 16 to 257 folds into the ABC transporter domain; the sequence is MEARHLSVRY…PSEQRTEDYV (242 aa). An ATP-binding site is contributed by 48–55; sequence GPSGCGKS.

Belongs to the ABC transporter superfamily. Phosphate importer (TC 3.A.1.7) family. In terms of assembly, the complex is composed of two ATP-binding proteins (PstB), two transmembrane proteins (PstC and PstA) and a solute-binding protein (PstS).

The protein localises to the cell inner membrane. It carries out the reaction phosphate(out) + ATP + H2O = ADP + 2 phosphate(in) + H(+). Its function is as follows. Part of the ABC transporter complex PstSACB involved in phosphate import. Responsible for energy coupling to the transport system. In Anaeromyxobacter dehalogenans (strain 2CP-C), this protein is Phosphate import ATP-binding protein PstB.